The chain runs to 291 residues: Ribosomal RNA small subunit methyltransferase H (291 aa).

S-adenosyl-L-methionine-binding positions include 31–33 (GGY), Asp49, Phe76, Asp97, and Gln104.

The protein belongs to the methyltransferase superfamily. RsmH family.

It is found in the cytoplasm. It carries out the reaction cytidine(1402) in 16S rRNA + S-adenosyl-L-methionine = N(4)-methylcytidine(1402) in 16S rRNA + S-adenosyl-L-homocysteine + H(+). In terms of biological role, specifically methylates the N4 position of cytidine in position 1402 (C1402) of 16S rRNA. In Anaplasma marginale (strain St. Maries), this protein is Ribosomal RNA small subunit methyltransferase H.